The primary structure comprises 79 residues: Hematopoietic cell signal transducer (79 aa).

An N-terminal signal peptide occupies residues 1 to 18 (MAPPGGILFLLLLPVAAA). Over 19-35 (QVTSGSCSGCGPLSLPL) the chain is Extracellular. A helical transmembrane segment spans residues 36–56 (LAGLVAADAVVSLLIVVGVFV). Over 57 to 79 (CGRPRSRPTQEDGKIYINMPGRG) the chain is Cytoplasmic. Tyrosine 72 bears the Phosphotyrosine mark. Residues 72–74 (YIN) form a GRB2 binding site region. Residues 72–75 (YINM) form a PIK3R1 binding site region.

The protein belongs to the DAP10 family. In terms of assembly, homodimer; Disulfide-linked. Heterohexamer composed of four subunits of HCST/DAP10 and two subunits of KLRK1. Interacts (via transmembrane domain) with KLRK1 (via transmembrane domain); the interaction is required for KLRK1 NK cell surface and induces NK cell-mediated cytotoxicity. Interacts with PIK3R1 and GRB2. Interacts with CLEC5A. Forms an CLEC5A/TYROBP/HCST trimolecular complex depending almost solely on TYROBP. Interacts with KLRK1. Interacts with CD300H. Post-translationally, phosphorylated; PIK3R1 and GRB2 associate specifically with tyrosine-phosphorylated HCST. In terms of processing, O-glycosylated. Expressed predominantly in lymphohematopoietic tissues.

Its subcellular location is the membrane. Functionally, transmembrane adapter protein which associates with KLRK1 to form an activation receptor KLRK1-HCST in lymphoid and myeloid cells; this receptor plays a major role in triggering cytotoxicity against target cells expressing cell surface ligands such as MHC class I chain-related MICA and MICB, and UL16-binding proteins (ULBPs); these ligands are up-regulated by stress conditions and pathological state such as viral infection and tumor transformation. Functions as a docking site for PI3-kinase PIK3R1 and GRB2. Interaction of ULBPs with KLRK1-HCST triggers calcium mobilization and activation of the PIK3R1, MAP2K/ERK, and JAK2/STAT5 signaling pathways. Both PIK3R1 and GRB2 are required for full KLRK1-HCST-mediated activation and ultimate killing of target cells. In NK cells, KLRK1-HCST signaling directly induces cytotoxicity and enhances cytokine production initiated via DAP12/TYROBP-associated receptors. In T-cells, it provides primarily costimulation for TCR-induced signals. KLRK1-HCST receptor plays a role in immune surveillance against tumors and is required for cytolysis of tumors cells; indeed, melanoma cells that do not express KLRK1 ligands escape from immune surveillance mediated by NK cells. The protein is Hematopoietic cell signal transducer (HCST) of Sus scrofa (Pig).